Here is a 79-residue protein sequence, read N- to C-terminus: Acyl carrier protein (79 aa).

The Carrier domain maps to 1–79; it reads MTKEQILVDV…DVVSYIETQV (79 aa). Ser-39 is subject to O-(pantetheine 4'-phosphoryl)serine.

Belongs to the acyl carrier protein (ACP) family. 4'-phosphopantetheine is transferred from CoA to a specific serine of apo-ACP by AcpS. This modification is essential for activity because fatty acids are bound in thioester linkage to the sulfhydryl of the prosthetic group.

It is found in the cytoplasm. Its pathway is lipid metabolism; fatty acid biosynthesis. Functionally, carrier of the growing fatty acid chain in fatty acid biosynthesis. This Exiguobacterium sibiricum (strain DSM 17290 / CCUG 55495 / CIP 109462 / JCM 13490 / 255-15) protein is Acyl carrier protein.